Here is a 441-residue protein sequence, read N- to C-terminus: Ribulose bisphosphate carboxylase (441 aa).

The active-site Proton acceptor is the K160. Substrate is bound at residue K162. K186, D188, and E189 together coordinate Mg(2+). An N6-carboxylysine modification is found at K186. H278 functions as the Proton acceptor in the catalytic mechanism. Substrate-binding positions include R279, H311, 364-366 (SGG), and 386-389 (QVGG).

The protein belongs to the RuBisCO large chain family. Type III subfamily. In terms of assembly, homodimer. In contrast to form I RuBisCO, the form III RuBisCO is composed solely of large subunits. Requires Mg(2+) as cofactor.

It carries out the reaction 2 (2R)-3-phosphoglycerate + 2 H(+) = D-ribulose 1,5-bisphosphate + CO2 + H2O. The catalysed reaction is D-ribulose 1,5-bisphosphate + O2 = 2-phosphoglycolate + (2R)-3-phosphoglycerate + 2 H(+). With respect to regulation, reversibly inhibited by O(2). Its function is as follows. Catalyzes the addition of molecular CO(2) and H(2)O to ribulose 1,5-bisphosphate (RuBP), generating two molecules of 3-phosphoglycerate (3-PGA). Functions in an archaeal AMP degradation pathway, together with AMP phosphorylase and R15P isomerase. In Archaeoglobus fulgidus (strain ATCC 49558 / DSM 4304 / JCM 9628 / NBRC 100126 / VC-16), this protein is Ribulose bisphosphate carboxylase.